Reading from the N-terminus, the 257-residue chain is Protein TONNEAU 1b (257 aa).

One can recognise a LisH domain in the interval 73 to 105; the sequence is SGRLLSALICEYLDWAQLNHTLKVYQPECNSAK. 2 disordered regions span residues 148-216 and 231-257; these read QVMG…EDMP and LDRK…EGKD. Residues 187–199 are compositionally biased toward low complexity; the sequence is SVSASQASGAATS. 2 stretches are compositionally biased toward basic and acidic residues: residues 201-212 and 244-257; these read YRKDESNWRYDT and NVKD…EGKD.

Interacts with CEN1, LNG1/TRM2 and LNG2/TRM1 (via C-terminus).

Its subcellular location is the cytoplasm. The protein localises to the cytoskeleton. In terms of biological role, involved in the control of the dynamic organization of the cortical cytoskeleton. May play a role in the organization of microtubule arrays at the centrosome through interaction with centrin 1 (CEN1). The polypeptide is Protein TONNEAU 1b (TON1B) (Arabidopsis thaliana (Mouse-ear cress)).